Here is a 910-residue protein sequence, read N- to C-terminus: Lysine-specific demethylase 7 homolog (910 aa).

Residues 1-11 are compositionally biased toward polar residues; it reads MDGNDINIQKN. Disordered regions lie at residues 1 to 58, 103 to 162, and 183 to 212; these read MDGN…HQTP, NKMG…GSEP, and QEEL…DRCG. A compositionally biased stretch (basic and acidic residues) spans 25–35; the sequence is QHSDHKNHESA. Positions 43-58 are enriched in polar residues; sequence YTASQPALSSTEHQTP. Residues 118 to 130 are compositionally biased toward basic and acidic residues; sequence PKSEPKIEPHVTD. Residues 150-160 are compositionally biased toward polar residues; the sequence is ESNQNYVSNGS. A compositionally biased stretch (basic and acidic residues) spans 200-210; sequence PEQKTPKESDR. The PHD-type zinc finger occupies 208–290; the sequence is SDRCGGCGKF…KFFCPKCVPH (83 aa). The JmjC domain maps to 441–612; that stretch reads SDNNEMKEIA…MQMRVYHLEN (172 aa). Residues 505-510, Tyr518, Lys525, and His580 contribute to the substrate site; that span reads TDFHVD. Fe cation-binding residues include His508 and Asp510. Fe cation is bound at residue His580. Disordered stretches follow at residues 712 to 790 and 864 to 910; these read KIQN…PSEV and EAVH…KLKM. A compositionally biased stretch (basic residues) spans 748–757; the sequence is YKKKYTKKAK. Positions 758-780 are enriched in basic and acidic residues; it reads KDNDDAPKVKKAKKEEVPEEKVP.

Belongs to the JHDM1 histone demethylase family. JHDM1D subfamily. It depends on Fe(2+) as a cofactor. As to expression, mainly expressed in neurons. Also weakly expressed in some muscle, intestinal and hypodermal cells.

Its subcellular location is the nucleus. With respect to regulation, competitively inhibited by 2-hydroxyglutarate. Its function is as follows. Histone demethylase required for nervous system development. Specifically demethylates dimethylated 'Lys-9', 'Lys-23' and 'Lys-27' (H3K9me2, H3K23me2 and H3K27me2, respectively) of histone H3, thereby playing a central role in histone code. Promotes mitochondrial stress-induced longevity. The sequence is that of Lysine-specific demethylase 7 homolog (jmjd-1.2) from Caenorhabditis elegans.